We begin with the raw amino-acid sequence, 282 residues long: Putative dolichyldiphosphatase (282 aa).

2 helical membrane-spanning segments follow: residues 26–46 (LLCA…ATLI) and 93–113 (MPSS…LFLL). Residues 121 to 153 (QQQQQQQKQKQRERKKQVTNVKTTTTNGSGNGS) form a disordered region. The span at 138-148 (VTNVKTTTTNG) shows a compositional bias: low complexity. The next 2 membrane-spanning stretches (helical) occupy residues 173 to 193 (WSFA…GAVA) and 207 to 227 (VLVG…VTHV).

This sequence belongs to the dolichyldiphosphatase family.

The protein resides in the endoplasmic reticulum membrane. The catalysed reaction is a di-trans,poly-cis-dolichyl diphosphate + H2O = a di-trans,poly-cis-dolichyl phosphate + phosphate + H(+). The protein operates within protein modification; protein glycosylation. The sequence is that of Putative dolichyldiphosphatase from Neurospora crassa (strain ATCC 24698 / 74-OR23-1A / CBS 708.71 / DSM 1257 / FGSC 987).